A 774-amino-acid polypeptide reads, in one-letter code: Vezatin (774 aa).

Transmembrane regions (helical) follow at residues 138–158 (IATPNIWETSILFVFLSAVAA) and 163–183 (SISSSLIWGPSLILFAAFTVL). A coiled-coil region spans residues 430–457 (VRSLQLHLKALLNEVIVLEDELDKLSSC). Acidic residues predominate over residues 746–757 (FGDEWDDDDDNE). A disordered region spans residues 746-774 (FGDEWDDDDDNEDHDHDKERNNDSSQLEG). A compositionally biased stretch (basic and acidic residues) spans 758–767 (DHDHDKERNN).

The protein belongs to the vezatin family. Interacts with myosin VIIa and the cadherin-catenins complex.

The protein localises to the cell membrane. Its subcellular location is the cell junction. It is found in the adherens junction. The protein resides in the nucleus. Its function is as follows. Plays a pivotal role in the establishment of adherens junctions and their maintenance in adult life. In Xenopus laevis (African clawed frog), this protein is Vezatin (vezt).